The primary structure comprises 841 residues: Toll-like receptor 4 (841 aa).

Residues 1-23 (MMARVRLAAALIPATAILSCLRT) form the signal peptide. The Extracellular portion of the chain corresponds to 24–632 (ESWDPCVQVV…FRNATCQMSK (609 aa)). The cysteines at positions 29 and 40 are disulfide-linked. N-linked (GlcNAc...) asparagine glycans are attached at residues Asn-35 and Asn-73. LRR repeat units follow at residues 55-76 (STKM…NFSS), 79-100 (ELQV…TFQG), 103-124 (HLST…AFSG), 127-148 (SLQK…PIGH), 151-172 (TLKE…EYFS), 176-197 (NLEH…DVKV), and 205-225 (NLSL…TFKE). Asn-205, Asn-238, Asn-282, and Asn-309 each carry an N-linked (GlcNAc...) asparagine glycan. An intrachain disulfide couples Cys-281 to Cys-306. LRR repeat units follow at residues 352–373 (SLKK…FQLP), 374–395 (SLQY…SHAD), 400–422 (NLKH…MGLE), 423–444 (KLEH…SVFL), 448–469 (NLRY…IFTG), 472–495 (SLKT…FTEL), 497–518 (NLTV…AFHS), 521–542 (SLQV…LYEP), and 545–568 (LLRI…QNLP). Residues Cys-390 and Cys-391 are joined by a disulfide bond. N-linked (GlcNAc...) asparagine glycosylation is found at Asn-497 and Asn-526. Asn-570 and Asn-575 each carry an N-linked (GlcNAc...) asparagine glycan. One can recognise an LRRCT domain in the interval 579–630 (NAFACVCEHQRFLQWVKDQRQLLVGAEQMMCAEPLDMKDMPVLSFRNATCQM). 2 cysteine pairs are disulfide-bonded: Cys-583–Cys-609 and Cys-585–Cys-628. A glycan (N-linked (GlcNAc...) asparagine) is linked at Asn-625. A helical transmembrane segment spans residues 633–653 (MIISVSVVTVLLVSVVGVLVY). Topologically, residues 654–841 (KFYFHLMLLA…TNPQEATTST (188 aa)) are cytoplasmic. The region spanning 673 to 816 (STYGAFVIYS…VFWRRLRKAL (144 aa)) is the TIR domain. The interval 820–841 (KPQSPEGTADAETNPQEATTST) is disordered. Residues 830-841 (AETNPQEATTST) are compositionally biased toward polar residues.

The protein belongs to the Toll-like receptor family. In terms of assembly, belongs to the lipopolysaccharide (LPS) receptor, a multi-protein complex containing at least CD14, LY96 and TLR4. Binding to bacterial LPS leads to homodimerization. Interacts with LY96 via the extracellular domain. Interacts with MYD88 and TIRAP via their respective TIR domains. Interacts with TICAM2. Interacts with NOX4. Interacts with CNPY3 and HSP90B1; this interaction is required for proper folding in the endoplasmic reticulum. Interacts with MAP3K21; this interaction leads to negative regulation of TLR4 signaling. Interacts with CD36, following CD36 stimulation by oxLDL or amyloid-beta 42, and forms a heterodimer with TLR6. The trimeric complex is internalized and triggers inflammatory response. LYN kinase activity facilitates TLR4-TLR6 heterodimerization and signal initiation. Interacts with TICAM1 in response to LPS in a WDFY1-dependent manner. Interacts with WDFY1 in response to LPS. Interacts with SMPDL3B. Interacts with CEACAM1; upon lipopolysaccharide stimulation, forms a complex including TLR4 and the phosphorylated form of SYK and CEACAM1, which in turn, recruits PTPN6 that dephosphorylates SYK, reducing the production of reactive oxygen species (ROS) and lysosome disruption, which in turn, reduces the activity of the inflammasome. Interacts with RFTN1; the interaction occurs in response to lipopolysaccharide stimulation. Interacts with SCIMP; the interaction occurs in response to lipopolysaccharide stimulation and is enhanced by phosphorylation of SCIMP by LYN. This interaction facilitates the phosphorylation of TLR4 by LYN which elicits a selective cytokine response in macrophages. Interacts with TRAF3IP3. Interacts with TREM1; this interaction enhances TLR4-mediated inflammatory response. Interacts with ZG16B/PAUF. Interacts with CD82; this interaction inhibits TLR4-mediated signaling pathway. Post-translationally, phosphorylated on tyrosine residues by LYN after binding lipopolysaccharide. In terms of processing, ubiquitinated by RNF128 via 'Lys-28'-linked polyubiquitin chains, leading to proteasomal degradation.

The protein resides in the cell membrane. It localises to the early endosome. It is found in the cell projection. Its subcellular location is the ruffle. In terms of biological role, transmembrane receptor that functions as a pattern recognition receptor recognizing pathogen- and damage-associated molecular patterns (PAMPs and DAMPs) to induce innate immune responses via downstream signaling pathways. At the plasma membrane, cooperates with LY96 to mediate the innate immune response to bacterial lipopolysaccharide (LPS). Also involved in LPS-independent inflammatory responses triggered by free fatty acids, such as palmitate, and Ni(2+). Mechanistically, acts via MYD88, TIRAP and TRAF6, leading to NF-kappa-B activation, cytokine secretion and the inflammatory response. Alternatively, CD14-mediated TLR4 internalization via endocytosis is associated with the initiation of a MYD88-independent signaling via the TICAM1-TBK1-IRF3 axis leading to type I interferon production. In addition to the secretion of proinflammatory cytokines, initiates the activation of NLRP3 inflammasome and formation of a positive feedback loop between autophagy and NF-kappa-B signaling cascade. In complex with TLR6, promotes inflammation in monocytes/macrophages by associating with TLR6 and the receptor CD86. Upon ligand binding, such as oxLDL or amyloid-beta 42, the TLR4:TLR6 complex is internalized and triggers inflammatory response, leading to NF-kappa-B-dependent production of CXCL1, CXCL2 and CCL9 cytokines, via MYD88 signaling pathway, and CCL5 cytokine, via TICAM1 signaling pathway. In myeloid dendritic cells, vesicular stomatitis virus glycoprotein G but not LPS promotes the activation of IRF7, leading to type I IFN production in a CD14-dependent manner. The protein is Toll-like receptor 4 (TLR4) of Boselaphus tragocamelus (Nilgai).